A 343-amino-acid polypeptide reads, in one-letter code: Nicotianamine synthase 3 (343 aa).

Belongs to the nicotianamine synthase (NAS)-like family. Expressed in leaves.

The catalysed reaction is 3 S-adenosyl-L-methionine = nicotianamine + 3 S-methyl-5'-thioadenosine + 3 H(+). Its function is as follows. Synthesizes nicotianamine, a polyamine that is the first intermediate in the synthesis of the phytosiderophores of the mugineic acid type found in gramineae which serve as a sensor for the physiological iron status within the plant, and/or might be involved in the transport of iron. This Oryza sativa subsp. indica (Rice) protein is Nicotianamine synthase 3 (NAS3).